The chain runs to 337 residues: Holliday junction branch migration complex subunit RuvB (337 aa).

The tract at residues 1–179 is large ATPase domain (RuvB-L); it reads MTHQVSVLHQ…FSFTGRVAYY (179 aa). ATP-binding positions include Leu-18, Arg-19, Gly-60, Lys-63, Thr-64, Ser-65, 126–128, Arg-169, Tyr-179, and Arg-216; that span reads EDY. Mg(2+) is bound at residue Thr-64. The tract at residues 180–250 is small ATPAse domain (RuvB-S); it reads SDEDLATILR…VAEKALAMLL (71 aa). The segment at 253–337 is head domain (RuvB-H); it reads EWGLNEIDIK…DNLQSLGEEK (85 aa). Residues Lys-308 and Arg-313 each contribute to the DNA site.

This sequence belongs to the RuvB family. As to quaternary structure, homohexamer. Forms an RuvA(8)-RuvB(12)-Holliday junction (HJ) complex. HJ DNA is sandwiched between 2 RuvA tetramers; dsDNA enters through RuvA and exits via RuvB. An RuvB hexamer assembles on each DNA strand where it exits the tetramer. Each RuvB hexamer is contacted by two RuvA subunits (via domain III) on 2 adjacent RuvB subunits; this complex drives branch migration. In the full resolvosome a probable DNA-RuvA(4)-RuvB(12)-RuvC(2) complex forms which resolves the HJ.

It localises to the cytoplasm. It catalyses the reaction ATP + H2O = ADP + phosphate + H(+). The RuvA-RuvB-RuvC complex processes Holliday junction (HJ) DNA during genetic recombination and DNA repair, while the RuvA-RuvB complex plays an important role in the rescue of blocked DNA replication forks via replication fork reversal (RFR). RuvA specifically binds to HJ cruciform DNA, conferring on it an open structure. The RuvB hexamer acts as an ATP-dependent pump, pulling dsDNA into and through the RuvAB complex. RuvB forms 2 homohexamers on either side of HJ DNA bound by 1 or 2 RuvA tetramers; 4 subunits per hexamer contact DNA at a time. Coordinated motions by a converter formed by DNA-disengaged RuvB subunits stimulates ATP hydrolysis and nucleotide exchange. Immobilization of the converter enables RuvB to convert the ATP-contained energy into a lever motion, pulling 2 nucleotides of DNA out of the RuvA tetramer per ATP hydrolyzed, thus driving DNA branch migration. The RuvB motors rotate together with the DNA substrate, which together with the progressing nucleotide cycle form the mechanistic basis for DNA recombination by continuous HJ branch migration. Branch migration allows RuvC to scan DNA until it finds its consensus sequence, where it cleaves and resolves cruciform DNA. This Chlamydia abortus (strain DSM 27085 / S26/3) (Chlamydophila abortus) protein is Holliday junction branch migration complex subunit RuvB.